The primary structure comprises 826 residues: Zinc phosphodiesterase ELAC protein 2 (826 aa).

The N-terminal 16 residues, 1 to 16, are a transit peptide targeting the mitochondrion; the sequence is MWALCSLLRSAAGRTM. A compositionally biased stretch (polar residues) spans 15–24; sequence TMSQGRTISQ. Disordered stretches follow at residues 15 to 51 and 189 to 231; these read TMSQ…PSGC and QRRG…VSQR. Positions 27–38 are enriched in basic and acidic residues; that stretch reads ARRERPRKDPLR. Phosphoserine is present on residues Ser-199, Ser-208, Ser-212, Ser-229, Ser-618, and Ser-736. Residues 208-224 are compositionally biased toward basic and acidic residues; it reads SPERSSDSESNENEPHL. The interval 798–826 is disordered; it reads ELAGGLEDGEPQQKRAHTEEPQAKKVRAQ. Over residues 808 to 820 the composition is skewed to basic and acidic residues; the sequence is PQQKRAHTEEPQA.

The protein belongs to the RNase Z family. As to quaternary structure, homodimer. Interacts with PTCD1. Requires Zn(2+) as cofactor.

Its subcellular location is the mitochondrion. The protein resides in the mitochondrion matrix. It is found in the mitochondrion nucleoid. The protein localises to the nucleus. It carries out the reaction Endonucleolytic cleavage of RNA, removing extra 3' nucleotides from tRNA precursor, generating 3' termini of tRNAs. A 3'-hydroxy group is left at the tRNA terminus and a 5'-phosphoryl group is left at the trailer molecule.. Its function is as follows. Zinc phosphodiesterase, which displays mitochondrial tRNA 3'-processing endonuclease activity. Involved in tRNA maturation, by removing a 3'-trailer from precursor tRNA. Associates with mitochondrial DNA complexes at the nucleoids to initiate RNA processing and ribosome assembly. The sequence is that of Zinc phosphodiesterase ELAC protein 2 (ELAC2) from Gorilla gorilla gorilla (Western lowland gorilla).